The chain runs to 348 residues: Thioesterase-like protein TwmA (348 aa).

It functions in the pathway secondary metabolite biosynthesis. Functionally, thioesterase-like protein; part of the gene cluster that mediates the biosynthesis of wortmanamides A and B, reduced long-chain polyketides amidated with a specific omega-amino acid, 5-aminopentanoic acid (5PA). The PKS modules of TwmB are involved in the synthesis of the polyketide backbone, whereas the non-canonical C domain of TwmB is a bonafide condensation domain that specifically selects 5PA and catalyzes amidation to release polyketide chain. The C domain clearly prefers C16 and C18 fatty acyl substrates, which is consistent with simultaneous formation of both octaketide and nonaketide acyl amides wortmanamides A and B. Because TwmB lacks a designated enoylreductase (ER) domain, the required activity is provided the enoyl reductase TwmE. The roles of the remaining enzymes have still to be clarified. The protein is Thioesterase-like protein TwmA of Talaromyces wortmannii (Penicillium wortmannii).